The primary structure comprises 221 residues: Ribonuclease P protein subunit p29 (221 aa).

At S10 the chain carries Phosphoserine.

This sequence belongs to the eukaryotic/archaeal RNase P protein component 1 family. In terms of assembly, component of nuclear RNase P and RNase MRP ribonucleoproteins. RNase P consists of a catalytic RNA moiety and 10 different protein chains; POP1, POP4, POP5, POP7, RPP14, RPP21, RPP25, RPP30, RPP38 and RPP40. Within the RNase P complex, POP1, POP7 and RPP25 form the 'finger' subcomplex, POP5, RPP14, RPP40 and homodimeric RPP30 form the 'palm' subcomplex, and RPP21, POP4 and RPP38 form the 'wrist' subcomplex. All subunits of the RNase P complex interact with the catalytic RNA. Several subunits of RNase P are also part of the RNase MRP complex. RNase MRP consists of a catalytic RNA moiety and about 8 protein subunits; POP1, POP7, RPP25, RPP30, RPP38, RPP40 and possibly also POP4 and POP5.

It is found in the nucleus. Its subcellular location is the nucleolus. In terms of biological role, component of ribonuclease P, a ribonucleoprotein complex that generates mature tRNA molecules by cleaving their 5'-ends. The sequence is that of Ribonuclease P protein subunit p29 (Pop4) from Mus musculus (Mouse).